The sequence spans 154 residues: Myoglobin (154 aa).

In terms of domain architecture, Globin spans 2 to 148 (GLSDGEWQLV…FRNDMAAKYK (147 aa)). A Phosphoserine modification is found at Ser-4. Position 65 (His-65) interacts with nitrite. His-65 lines the O2 pocket. Thr-68 carries the post-translational modification Phosphothreonine. His-94 is a binding site for heme b.

The protein belongs to the globin family. Monomeric.

The protein resides in the cytoplasm. It localises to the sarcoplasm. The enzyme catalyses Fe(III)-heme b-[protein] + nitric oxide + H2O = Fe(II)-heme b-[protein] + nitrite + 2 H(+). It carries out the reaction H2O2 + AH2 = A + 2 H2O. Its function is as follows. Monomeric heme protein which primary function is to store oxygen and facilitate its diffusion within muscle tissues. Reversibly binds oxygen through a pentacoordinated heme iron and enables its timely and efficient release as needed during periods of heightened demand. Depending on the oxidative conditions of tissues and cells, and in addition to its ability to bind oxygen, it also has a nitrite reductase activity whereby it regulates the production of bioactive nitric oxide. Under stress conditions, like hypoxia and anoxia, it also protects cells against reactive oxygen species thanks to its pseudoperoxidase activity. This Erythrocebus patas (Red guenon) protein is Myoglobin (MB).